Reading from the N-terminus, the 553-residue chain is MKSAQYSLVLLLGFTLLYLLPLEFRALWQPDETRYAEISREMLSAGNWIVPHFLDVRYFEKPVAGYWINNLSQMIFGHNNFSVRFGAVFSTTLSALMVAWLAFRLWRDKTVAVLSGVIFLTCLLVYGVGTYAVLDPMITLWLVAAMCSFWLGANAQTRAGKAGGYILLGLACGMGVMTKGFLALAVPVLGVLPWVIAQKRWKEVLLFGPLAIISATLITLPWALAIAKAEPTFWHYFFWVEHIQRFAENDAQHKAPFWYYIPFLIAGCLPWVALLPGALKRSWNERHIESGTLYLLGWVVMPLLFFSIAKGKLPTYILPCFAPLAILLARHATQLVATPRTLKVNGWINTVFGAVCALIVLLVLAPWGIAKHPIYASHEVLKVIQASIAFLVWALVGYLTTRNNARLWQWAALCPLGIALLVGGMIPDKVVYSKHPQAFVDLVRPELESSRYILADSVGVGAGIAWEMKRSDITLYAKPGELDYGLTTFADAKDNFVSRDDFASWLALHRKEGNVSLVKLLSKDSVLEDSDVPAPDKVYHKGRFLLFFYEKTP.

A run of 12 helical transmembrane segments spans residues 8–28 (LVLLLGFTLLYLLPLEFRALW), 83–103 (VRFGAVFSTTLSALMVAWLAF), 111–131 (VAVLSGVIFLTCLLVYGVGTY), 132–152 (AVLDPMITLWLVAAMCSFWLG), 176–196 (VMTKGFLALAVPVLGVLPWVI), 204–224 (VLLFGPLAIISATLITLPWAL), 255–275 (APFWYYIPFLIAGCLPWVALL), 288–308 (IESGTLYLLGWVVMPLLFFSI), 317–337 (ILPCFAPLAILLARHATQLVA), 350–370 (TVFGAVCALIVLLVLAPWGIA), 380–400 (VLKVIQASIAFLVWALVGYLT), and 407–427 (LWQWAALCPLGIALLVGGMIP).

This sequence belongs to the glycosyltransferase 83 family.

The protein localises to the cell inner membrane. The catalysed reaction is 4-amino-4-deoxy-alpha-L-arabinopyranosyl di-trans,octa-cis-undecaprenyl phosphate + lipid IVA = lipid IIA + di-trans,octa-cis-undecaprenyl phosphate.. It participates in lipopolysaccharide metabolism; 4-amino-4-deoxy-beta-L-arabinose-lipid A biosynthesis. Its function is as follows. Catalyzes the transfer of the L-Ara4N moiety of the glycolipid undecaprenyl phosphate-alpha-L-Ara4N to lipid A. The modified arabinose is attached to lipid A and is required for resistance to polymyxin and cationic antimicrobial peptides. This chain is Undecaprenyl phosphate-alpha-4-amino-4-deoxy-L-arabinose arabinosyl transferase, found in Enterobacter sp. (strain 638).